We begin with the raw amino-acid sequence, 66 residues long: Beta-mammal toxin Co3 (66 aa).

Residues 1-66 form the LCN-type CS-alpha/beta domain; the sequence is KEGYIVNYYD…VWPLPNKTCN (66 aa). 4 disulfide bridges follow: Cys-12–Cys-65, Cys-16–Cys-41, Cys-25–Cys-46, and Cys-29–Cys-48.

In terms of tissue distribution, expressed by the venom gland.

The protein localises to the secreted. Functionally, beta toxins bind voltage-independently at site-4 of sodium channels (Nav) and shift the voltage of activation toward more negative potentials thereby affecting sodium channel activation and promoting spontaneous and repetitive firing. This toxin acts on human Nav1.2/SCN2A, Nav1.4/SCN4A and Nav1.6/SCN8A voltage-gated sodium channels. Also, it reduces the peak of sodium currents in Nav1.5/SCN5A at all potentials. In vivo, is lethal to mice when intraperitoneally injected at a dose of 5ug. No activity is observed when injected into crickets or woodlice. The chain is Beta-mammal toxin Co3 from Centruroides ornatus (Scorpion).